Here is a 222-residue protein sequence, read N- to C-terminus: ATP-dependent Clp protease proteolytic subunit 1 (222 aa).

Ser121 (nucleophile) is an active-site residue. His146 is an active-site residue.

It belongs to the peptidase S14 family. In terms of assembly, fourteen ClpP subunits assemble into 2 heptameric rings which stack back to back to give a disk-like structure with a central cavity, resembling the structure of eukaryotic proteasomes.

The protein resides in the cytoplasm. It carries out the reaction Hydrolysis of proteins to small peptides in the presence of ATP and magnesium. alpha-casein is the usual test substrate. In the absence of ATP, only oligopeptides shorter than five residues are hydrolyzed (such as succinyl-Leu-Tyr-|-NHMec, and Leu-Tyr-Leu-|-Tyr-Trp, in which cleavage of the -Tyr-|-Leu- and -Tyr-|-Trp bonds also occurs).. In terms of biological role, cleaves peptides in various proteins in a process that requires ATP hydrolysis. Has a chymotrypsin-like activity. Plays a major role in the degradation of misfolded proteins. The protein is ATP-dependent Clp protease proteolytic subunit 1 of Thermobifida fusca (strain YX).